A 346-amino-acid chain; its full sequence is MSTPTTPLSYKDAGVDIDAGNALVNNIKSAVKRTRRPEVMGNLGGFGALCELPTKYKHPVLVSGTDGVGTKLRLAIDYKKHDNVGVDLVAMCSNDLIVSGAEPLFFLDYYATGKLDVEVATAVVKGIAEGCVQSGCALIGGETAEMPGMYEGDDYDLAGFCVGVAEKEEIIDGTKVQDGDALIALASSGPHSNGFSLIRKVLEVSKADPEQELAGKPLIDHLLEPTKIYVKSLLKLIEEHDVHAMSHITGGGFWENIPRVLPEDCKAVVKSDSWQWPVVFNWLMEKGNISEFEMYRTFNCGVGMVVALPADKVESALNLLNAEGEKAWLIGDIAKRSGDEEQVEIL.

This sequence belongs to the AIR synthase family.

The protein localises to the cytoplasm. It carries out the reaction 2-formamido-N(1)-(5-O-phospho-beta-D-ribosyl)acetamidine + ATP = 5-amino-1-(5-phospho-beta-D-ribosyl)imidazole + ADP + phosphate + H(+). The protein operates within purine metabolism; IMP biosynthesis via de novo pathway; 5-amino-1-(5-phospho-D-ribosyl)imidazole from N(2)-formyl-N(1)-(5-phospho-D-ribosyl)glycinamide: step 2/2. The polypeptide is Phosphoribosylformylglycinamidine cyclo-ligase (Shewanella piezotolerans (strain WP3 / JCM 13877)).